Here is a 503-residue protein sequence, read N- to C-terminus: Aromatase (503 aa).

2 residues coordinate substrate: Asp309 and Met374. Cys437 is a binding site for heme.

The protein belongs to the cytochrome P450 family. Heme serves as cofactor.

It localises to the membrane. The enzyme catalyses testosterone + 3 reduced [NADPH--hemoprotein reductase] + 3 O2 = 17beta-estradiol + formate + 3 oxidized [NADPH--hemoprotein reductase] + 4 H2O + 4 H(+). The catalysed reaction is androst-4-ene-3,17-dione + 3 reduced [NADPH--hemoprotein reductase] + 3 O2 = estrone + formate + 3 oxidized [NADPH--hemoprotein reductase] + 4 H2O + 4 H(+). In terms of biological role, catalyzes the formation of aromatic C18 estrogens from C19 androgens. This Callithrix jacchus (White-tufted-ear marmoset) protein is Aromatase (CYP19A1).